The primary structure comprises 126 residues: MSDSRYKVDVSVVTRFLAEQSQPEQNRFAFAYTITVHNNGELPAKLLSRHWIITDGDGHVEEVRGEGVVGQQPLIKVGQSHTYSSGTVMTTQVGNMQGSYQMLAEDGKRFDAVIEPFRLAVPGSLH.

Residues 2–126 (SDSRYKVDVS…FRLAVPGSLH (125 aa)) form the ApaG domain.

The sequence is that of Protein ApaG from Pseudomonas syringae pv. tomato (strain ATCC BAA-871 / DC3000).